The sequence spans 114 residues: Phosphoribosyl-AMP cyclohydrolase (114 aa).

Aspartate 76 is a Mg(2+) binding site. Cysteine 77 is a Zn(2+) binding site. Mg(2+) is bound by residues aspartate 78 and aspartate 80. Zn(2+) is bound by residues cysteine 93 and cysteine 100.

It belongs to the PRA-CH family. Homodimer. It depends on Mg(2+) as a cofactor. Requires Zn(2+) as cofactor.

Its subcellular location is the cytoplasm. It carries out the reaction 1-(5-phospho-beta-D-ribosyl)-5'-AMP + H2O = 1-(5-phospho-beta-D-ribosyl)-5-[(5-phospho-beta-D-ribosylamino)methylideneamino]imidazole-4-carboxamide. It participates in amino-acid biosynthesis; L-histidine biosynthesis; L-histidine from 5-phospho-alpha-D-ribose 1-diphosphate: step 3/9. Its function is as follows. Catalyzes the hydrolysis of the adenine ring of phosphoribosyl-AMP. The protein is Phosphoribosyl-AMP cyclohydrolase of Streptococcus gordonii (strain Challis / ATCC 35105 / BCRC 15272 / CH1 / DL1 / V288).